A 129-amino-acid polypeptide reads, in one-letter code: Small ribosomal subunit protein uS11 (129 aa).

It belongs to the universal ribosomal protein uS11 family. In terms of assembly, part of the 30S ribosomal subunit. Interacts with proteins S7 and S18. Binds to IF-3.

Its function is as follows. Located on the platform of the 30S subunit, it bridges several disparate RNA helices of the 16S rRNA. Forms part of the Shine-Dalgarno cleft in the 70S ribosome. In Bradyrhizobium diazoefficiens (strain JCM 10833 / BCRC 13528 / IAM 13628 / NBRC 14792 / USDA 110), this protein is Small ribosomal subunit protein uS11.